Reading from the N-terminus, the 255-residue chain is Type III pantothenate kinase (255 aa).

6–13 (DIGNTNIK) serves as a coordination point for ATP. 107–110 (GADR) is a substrate binding site. The active-site Proton acceptor is the Asp-109. Thr-132 provides a ligand contact to ATP. Residue Thr-184 coordinates substrate.

This sequence belongs to the type III pantothenate kinase family. In terms of assembly, homodimer. NH4(+) is required as a cofactor. The cofactor is K(+).

The protein resides in the cytoplasm. The catalysed reaction is (R)-pantothenate + ATP = (R)-4'-phosphopantothenate + ADP + H(+). It functions in the pathway cofactor biosynthesis; coenzyme A biosynthesis; CoA from (R)-pantothenate: step 1/5. Its function is as follows. Catalyzes the phosphorylation of pantothenate (Pan), the first step in CoA biosynthesis. This Roseiflexus castenholzii (strain DSM 13941 / HLO8) protein is Type III pantothenate kinase.